Reading from the N-terminus, the 408-residue chain is Glutamate N-acetyltransferase (408 aa).

T150, K176, T189, E271, N403, and T408 together coordinate substrate. T189 acts as the Nucleophile in catalysis.

Belongs to the ArgJ family. In terms of assembly, heterotetramer of two alpha and two beta chains.

The protein resides in the cytoplasm. It catalyses the reaction N(2)-acetyl-L-ornithine + L-glutamate = N-acetyl-L-glutamate + L-ornithine. It participates in amino-acid biosynthesis; L-arginine biosynthesis; L-ornithine and N-acetyl-L-glutamate from L-glutamate and N(2)-acetyl-L-ornithine (cyclic): step 1/1. Catalyzes the transfer of the acetyl group from N(2)-acetylornithine to glutamate, forming N-acetylglutamate and L-ornithine. This chain is Glutamate N-acetyltransferase, found in Methanococcus maripaludis (strain C7 / ATCC BAA-1331).